Here is a 106-residue protein sequence, read N- to C-terminus: Iron-sulfur cluster assembly protein CyaY (106 aa).

It belongs to the frataxin family.

Functionally, involved in iron-sulfur (Fe-S) cluster assembly. May act as a regulator of Fe-S biogenesis. The protein is Iron-sulfur cluster assembly protein CyaY of Escherichia coli O6:H1 (strain CFT073 / ATCC 700928 / UPEC).